The sequence spans 836 residues: Protein O-mannosyl-transferase TMTC2 (836 aa).

The helical transmembrane segment at 1-21 (MIAELVSSALGLALYLNTLSA) threads the bilayer. Residues 22 to 77 (DFCYDDSRAIKTNQDLLPETPWTHIFYNDFWGTLLTHSGSHKSYRPLCTLSFRLNH) are Extracellular-facing. The helical transmembrane segment at 78–98 (AIGGLNPWSYHLVNVLLHAAV) threads the bilayer. Residues 99–107 (TGLFTRFSK) are Cytoplasmic-facing. A helical transmembrane segment spans residues 108–128 (ALLGDGYWTFMAGLMFASHPI). The Extracellular portion of the chain corresponds to 129 to 132 (HTEA). The chain crosses the membrane as a helical span at residues 133–153 (VAGIVGRADVGASLFFLLSLL). The Cytoplasmic portion of the chain corresponds to 154 to 168 (CYIKHCSTRGYSART). 2 helical membrane passes run 169–184 (WGWF…CSML) and 185–204 (WKEQ…VFVF). Topologically, residues 205–220 (HRLKMKQILPTIYKRK) are cytoplasmic. A helical membrane pass occupies residues 221-241 (NLSLFLSISLLTFWGTCLLGA). Topologically, residues 242–312 (RLYWMGNKPP…KTVCDWRNLH (71 aa)) are extracellular. A helical transmembrane segment spans residues 313-333 (TVAFYSGLLLLAYCGLKNPSL). Residues 334 to 392 (EGECNGKALTNGKQNANGHSCHSDVEYRNSEMKPSFASKVENGIKNCVPQRTQLPSTEN) are Cytoplasmic-facing. Residues 393 to 415 (IVILSLSLLIIPFIPATNLFFYV) form a helical membrane-spanning segment. The Extracellular segment spans residues 416–422 (GFVIAER). Residues 423–443 (VLYIPSMGFCLLITVGARALY) form a helical membrane-spanning segment. The Cytoplasmic segment spans residues 444–449 (VKVQKR). The chain crosses the membrane as a helical span at residues 450-470 (FLKSLVFYATATLIVFYGVKT). Topologically, residues 471-836 (AIRNGDWQNE…EKQGLKTSKT (366 aa)) are extracellular. TPR repeat units lie at residues 493–526 (AKAW…RSNM), 527–560 (ADML…RPTL), 561–594 (ASAY…PDEN), 606–639 (TSCL…MPRH), 643–676 (QSLY…KTDH), 677–710 (IPAH…DPTK), 711–744 (GNCY…DNTE), 745–778 (FDVV…RPNY), and 779–812 (PAAL…KPDD).

It belongs to the TMTC family.

It localises to the membrane. Its subcellular location is the endoplasmic reticulum. It carries out the reaction a di-trans,poly-cis-dolichyl beta-D-mannosyl phosphate + L-seryl-[protein] = 3-O-(alpha-D-mannosyl)-L-seryl-[protein] + a di-trans,poly-cis-dolichyl phosphate + H(+). The catalysed reaction is a di-trans,poly-cis-dolichyl beta-D-mannosyl phosphate + L-threonyl-[protein] = 3-O-(alpha-D-mannosyl)-L-threonyl-[protein] + a di-trans,poly-cis-dolichyl phosphate + H(+). It functions in the pathway protein modification; protein glycosylation. In terms of biological role, transfers mannosyl residues to the hydroxyl group of serine or threonine residues. The 4 members of the TMTC family are O-mannosyl-transferases dedicated primarily to the cadherin superfamily, each member seems to have a distinct role in decorating the cadherin domains with O-linked mannose glycans at specific regions. Also acts as O-mannosyl-transferase on other proteins such as PDIA3. The polypeptide is Protein O-mannosyl-transferase TMTC2 (Mus musculus (Mouse)).